Reading from the N-terminus, the 266-residue chain is Undecaprenyl-diphosphatase (266 aa).

A run of 8 helical transmembrane segments spans residues 1–21, 39–59, 87–107, 111–131, 150–172, 187–207, 218–238, and 244–264; these read MTLT…FLPI, QGLA…MIYF, WWVI…KAFI, ARSA…LWYA, LIVG…ITMT, FSFL…TLDL, ALIV…YLFL, and IGML…LLFV.

This sequence belongs to the UppP family.

The protein localises to the cell inner membrane. It catalyses the reaction di-trans,octa-cis-undecaprenyl diphosphate + H2O = di-trans,octa-cis-undecaprenyl phosphate + phosphate + H(+). Functionally, catalyzes the dephosphorylation of undecaprenyl diphosphate (UPP). Confers resistance to bacitracin. This chain is Undecaprenyl-diphosphatase, found in Pseudoalteromonas atlantica (strain T6c / ATCC BAA-1087).